A 178-amino-acid chain; its full sequence is CASP-like protein 5B1 (178 aa).

The Cytoplasmic portion of the chain corresponds to Met-1 to Thr-37. A helical membrane pass occupies residues Ile-38–Met-58. Residues Val-59 to Ala-69 are Extracellular-facing. N-linked (GlcNAc...) asparagine glycosylation occurs at Asn-66. Residues Phe-70–Leu-90 traverse the membrane as a helical segment. Topologically, residues Asp-91–Ser-104 are cytoplasmic. The chain crosses the membrane as a helical span at residues Val-105 to Ala-125. The Extracellular portion of the chain corresponds to Cys-126–Ala-154. A helical transmembrane segment spans residues Ala-155 to Trp-175. The Cytoplasmic segment spans residues Ala-176–Glu-178.

Belongs to the Casparian strip membrane proteins (CASP) family. As to quaternary structure, homodimer and heterodimers.

It localises to the cell membrane. The polypeptide is CASP-like protein 5B1 (Ginkgo biloba (Ginkgo)).